A 281-amino-acid chain; its full sequence is Cytochrome bc1 complex cytochrome c subunit (281 aa).

The chain crosses the membrane as a helical span at residues 17-37; sequence AAGAMALAVGLTGAGILVNAV. Cytochrome c domains are found at residues 52–132 and 162–240; these read ALIQ…EANG and ADVA…KSAK. Positions 65, 68, 69, 175, 178, and 179 each coordinate heme c. Residues 259 to 279 form a helical membrane-spanning segment; it reads GMMMWLVGIVVLVAAAMWIGS.

As to quaternary structure, the cytochrome bc1 complex is composed of a cytochrome b (QcrB), the Rieske iron-sulfur protein (QcrA) and a diheme cytochrome c (QcrC) subunit. The bc1 complex forms a supercomplex with cytochrome c oxidase (cytochrome aa3). Binds 2 heme c groups covalently per subunit.

It is found in the cell membrane. It catalyses the reaction a quinol + 2 Fe(III)-[cytochrome c](out) = a quinone + 2 Fe(II)-[cytochrome c](out) + 2 H(+)(out). Functionally, cytochrome c1 subunit of the cytochrome bc1 complex, an essential component of the respiratory electron transport chain required for ATP synthesis. The bc1 complex catalyzes the oxidation of menaquinol and the reduction of cytochrome c in the respiratory chain. The bc1 complex operates through a Q-cycle mechanism that couples electron transfer to generation of the proton gradient that drives ATP synthesis. The chain is Cytochrome bc1 complex cytochrome c subunit (qcrC) from Corynebacterium diphtheriae (strain ATCC 700971 / NCTC 13129 / Biotype gravis).